A 446-amino-acid chain; its full sequence is SPARC-related modular calcium-binding protein 2 (446 aa).

A signal peptide spans 1 to 21 (MLLPQLCWLPLLAGLLPPVPA). Residues 34 to 86 (QDKDKDCSLDCAGSPQKPLCASDGRTFLSRCEFQRAKCKDPQLEIAYRGNCKD) enclose the Kazal-like domain. Intrachain disulfides connect cysteine 40/cysteine 71, cysteine 44/cysteine 64, cysteine 53/cysteine 84, cysteine 90/cysteine 113, cysteine 124/cysteine 131, and cysteine 133/cysteine 153. The Thyroglobulin type-1 1 domain maps to 87–153 (VSRCVAERKY…TAVAHKTPRC (67 aa)). Residues 147–228 (AHKTPRCPGS…EHQSALEEAK (82 aa)) form a disordered region. Positions 161–172 (LPQREGTGKTDD) are enriched in basic and acidic residues. A glycan (N-linked (GlcNAc...) asparagine) is linked at asparagine 206. Residues 206–216 (NKTNKNSVSSC) are compositionally biased toward polar residues. The Thyroglobulin type-1 2 domain occupies 213–281 (VSSCDQEHQS…TSTRYEQPKC (69 aa)). Intrachain disulfides connect cysteine 216/cysteine 240, cysteine 251/cysteine 258, and cysteine 260/cysteine 281. The span at 217–228 (DQEHQSALEEAK) shows a compositional bias: basic and acidic residues. EF-hand domains are found at residues 347–382 (LEER…LRKK) and 384–419 (KPKK…AKED). Positions 360, 362, 364, 366, 371, 397, 399, 401, 403, and 408 each coordinate Ca(2+). Asparagine 362 is a glycosylation site (N-linked (GlcNAc...) asparagine). Residues 416 to 446 (AKEDGKADTKKRHTPRGHAESTSNRQPRKQG) are disordered.

As to quaternary structure, binds various proteins from the extracellular matrix.

It localises to the secreted. It is found in the extracellular space. Its subcellular location is the extracellular matrix. The protein resides in the basement membrane. Functionally, promotes matrix assembly and cell adhesiveness. Can stimulate endothelial cell proliferation, migration, as well as angiogenesis. The sequence is that of SPARC-related modular calcium-binding protein 2 (SMOC2) from Homo sapiens (Human).